We begin with the raw amino-acid sequence, 476 residues long: MNFTSTIGLEVHFELKTKSKIFSPSPVTYGAKPNTETNVIDWGYPGTLPMVNKEVYRLGLMVALATHSHVNPVTHFDRKNYFYPDNPKAYQITQFFKPLAENGYVEVEVHGKKKKIHIHEMHIEEDAGKNTHGTNGFSYVDYNRQGVPLLEVVSEPEMTDPDEAVAYLEKLREIVQFTGASDVKMEEGSMRIDTNISIRPAGQKELGTKVEMKNLNSFEHVRMSLAYEQKRQQEILLSGGRVRLSTRRFDTNTGKTVLERVKEGDADYRYFPEPDLPPYHIKQEWVDEIAANLPKTADERRKIYVDEYGLKPYDANVLLQNKESSDFFDATVAAGADPQQAANWMNTQVNGYLNEKHAELKDIALTPENLAAMIKLISDGTISSKIAKKVFAETVANGTDPKKYVEENGMAQLSDESVLAPMVKEVVDANPQSVEDYKNGKDRAIGFLVGQIMKQTRGKANPKVINKLLLADLASR.

This sequence belongs to the GatB/GatE family. GatB subfamily. As to quaternary structure, heterotrimer of A, B and C subunits.

It carries out the reaction L-glutamyl-tRNA(Gln) + L-glutamine + ATP + H2O = L-glutaminyl-tRNA(Gln) + L-glutamate + ADP + phosphate + H(+). It catalyses the reaction L-aspartyl-tRNA(Asn) + L-glutamine + ATP + H2O = L-asparaginyl-tRNA(Asn) + L-glutamate + ADP + phosphate + 2 H(+). Allows the formation of correctly charged Asn-tRNA(Asn) or Gln-tRNA(Gln) through the transamidation of misacylated Asp-tRNA(Asn) or Glu-tRNA(Gln) in organisms which lack either or both of asparaginyl-tRNA or glutaminyl-tRNA synthetases. The reaction takes place in the presence of glutamine and ATP through an activated phospho-Asp-tRNA(Asn) or phospho-Glu-tRNA(Gln). This chain is Aspartyl/glutamyl-tRNA(Asn/Gln) amidotransferase subunit B, found in Lactobacillus delbrueckii subsp. bulgaricus (strain ATCC 11842 / DSM 20081 / BCRC 10696 / JCM 1002 / NBRC 13953 / NCIMB 11778 / NCTC 12712 / WDCM 00102 / Lb 14).